The chain runs to 1481 residues: ABC multidrug transporter atrH (1481 aa).

The segment covering 1–10 has biased composition (basic and acidic residues); that stretch reads MALPREERSL. Disordered stretches follow at residues 1–45 and 61–89; these read MALP…GIEQ and ISQT…SDQF. N-linked (GlcNAc...) asparagine glycosylation is found at N19, N76, and N320. The region spanning 134-396 is the ABC transporter 1 domain; the sequence is ATVSNVWLKA…FIEMGFDCPE (263 aa). A helical membrane pass occupies residues 507–527; the sequence is MTLSTVIGNSILALIISSVFY. N-linked (GlcNAc...) asparagine glycosylation occurs at N530. The next 5 membrane-spanning stretches (helical) occupy residues 542–562, 587–607, 616–636, 650–670, and 758–778; these read LLFF…LTLW, LIVD…ILYF, GHFF…SNVF, EVPA…TIPV, and FGIL…ASEL. The 244-residue stretch at 838 to 1081 folds into the ABC transporter 2 domain; it reads FHWQDVCYDI…LIKYFEDKGS (244 aa). 874-881 is a binding site for ATP; it reads GVTGAGKT. 6 helical membrane-spanning segments follow: residues 1174 to 1194, 1210 to 1230, 1249 to 1269, 1298 to 1318, 1327 to 1347, and 1358 to 1378; these read YIYA…FTFW, IFML…YFAM, AFML…AVPA, LLVL…IAGI, IAQL…SPDV, and ASPF…GAPV. N-linked (GlcNAc...) asparagine glycosylation is present at N1395. A helical transmembrane segment spans residues 1446–1466; that stretch reads VGILFVYIVFNTVAAVFLYWL.

The protein belongs to the ABC transporter superfamily. ABCG family. PDR (TC 3.A.1.205) subfamily.

It is found in the cell membrane. Its function is as follows. Pleiotropic ABC efflux transporter involved in the basal level of azole susceptibility. The polypeptide is ABC multidrug transporter atrH (Aspergillus oryzae (strain ATCC 42149 / RIB 40) (Yellow koji mold)).